The primary structure comprises 231 residues: Large ribosomal subunit protein uL1 (231 aa).

It belongs to the universal ribosomal protein uL1 family. Part of the 50S ribosomal subunit.

Functionally, binds directly to 23S rRNA. The L1 stalk is quite mobile in the ribosome, and is involved in E site tRNA release. In terms of biological role, protein L1 is also a translational repressor protein, it controls the translation of the L11 operon by binding to its mRNA. The protein is Large ribosomal subunit protein uL1 of Verminephrobacter eiseniae (strain EF01-2).